Consider the following 582-residue polypeptide: Threonine--tRNA ligase (582 aa).

The tract at residues 185 to 478 is catalytic; the sequence is DHRKLGKELD…LVEHYGGAFP (294 aa). Cysteine 278, histidine 329, and histidine 455 together coordinate Zn(2+).

Belongs to the class-II aminoacyl-tRNA synthetase family. Homodimer. Requires Zn(2+) as cofactor.

The protein resides in the cytoplasm. It carries out the reaction tRNA(Thr) + L-threonine + ATP = L-threonyl-tRNA(Thr) + AMP + diphosphate + H(+). In terms of biological role, catalyzes the attachment of threonine to tRNA(Thr) in a two-step reaction: L-threonine is first activated by ATP to form Thr-AMP and then transferred to the acceptor end of tRNA(Thr). Also edits incorrectly charged L-seryl-tRNA(Thr). In Borrelia garinii subsp. bavariensis (strain ATCC BAA-2496 / DSM 23469 / PBi) (Borreliella bavariensis), this protein is Threonine--tRNA ligase.